We begin with the raw amino-acid sequence, 306 residues long: MTDNAPQLALRDVAARQLANATKTVPQLRTITPRWLVRLLHWTPVEAGIYRVNQVKDASQITVACSERDESELPETFVDYIDNPREYLLSAVNTVVDVHTRISDLYSNPHDQIREQLRLTIEIMKERQESELINSREYGLLNNVAPGQLVHTRNGAPTPDDLDELLIRVWKEPAFFLAHPQAIAAFGRECTRRGVPPATVSLFGSSFITWRGVPLIPSDKVPLENGKTKILLLRVGESRQGVVGLYQPNLPGEQGMGLSVRFMGINRKALASYLVSLYCSLAVLTDDALAVLDNVDVTQYHTYRYN.

This sequence belongs to the encapsulin family. Family 2A subfamily. In terms of assembly, the 24.5 nm encapsulin nanocompartment is formed by 60 subunits; monomers form pentamers which assemble to form shells. There are 12 positively charged pores where the pentamers meet with a minimal pore diameter of 3.7 Angstroms as well 3-fold axis channels and dimer channels.

The protein resides in the encapsulin nanocompartment. Functionally, shell component of a type 2A encapsulin nanocompartment. Expression in E.coli generates nanocompartments with an average diameter of 25 nm. They can be disassembled by treatment with 6M guanidine hydrochloride and reassembled with cargo. The nanocompartment is probably involved in sulfur metabolism. Probably allows passage of cysteine into its interior; during growth in light the physiological pH is 8-8.4, about 30-54% of free cysteine (charge -1) would be able to pass through the shell. The sequence is that of Type 2A encapsulin shell protein SrpI from Synechococcus elongatus (strain ATCC 33912 / PCC 7942 / FACHB-805) (Anacystis nidulans R2).